A 156-amino-acid polypeptide reads, in one-letter code: Small ribosomal subunit protein uS7 (156 aa).

This sequence belongs to the universal ribosomal protein uS7 family. As to quaternary structure, part of the 30S ribosomal subunit. Contacts proteins S9 and S11.

One of the primary rRNA binding proteins, it binds directly to 16S rRNA where it nucleates assembly of the head domain of the 30S subunit. Is located at the subunit interface close to the decoding center, probably blocks exit of the E-site tRNA. This Brachyspira hyodysenteriae (strain ATCC 49526 / WA1) protein is Small ribosomal subunit protein uS7.